Reading from the N-terminus, the 100-residue chain is Putative exopolysaccharide production repressor protein y4xQ (100 aa).

Helical transmembrane passes span isoleucine 9 to serine 29 and threonine 35 to tryptophan 55. A disordered region spans residues threonine 66–arginine 100.

To Rhizobium exopolysaccharide production repressor protein (ExoX).

The protein resides in the cell membrane. Functionally, could be involved in the inhibition of exopolysaccharide synthesis (EPS) and nodulation ability (nod). In Sinorhizobium fredii (strain NBRC 101917 / NGR234), this protein is Putative exopolysaccharide production repressor protein y4xQ.